We begin with the raw amino-acid sequence, 160 residues long: Major pollen allergen Car b 1 isoform 2 (160 aa).

The protein belongs to the BetVI family.

The polypeptide is Major pollen allergen Car b 1 isoform 2 (Carpinus betulus (European hornbeam)).